We begin with the raw amino-acid sequence, 225 residues long: 3-dehydroquinate dehydratase (225 aa).

3-dehydroquinate is bound by residues Ser-6, 30–32 (EWR), and Arg-62. Catalysis depends on His-118, which acts as the Proton donor/acceptor. Lys-143 acts as the Schiff-base intermediate with substrate in catalysis. Arg-186, Ser-205, and Gln-209 together coordinate 3-dehydroquinate.

Belongs to the type-I 3-dehydroquinase family. In terms of assembly, homodimer.

The catalysed reaction is 3-dehydroquinate = 3-dehydroshikimate + H2O. Its pathway is metabolic intermediate biosynthesis; chorismate biosynthesis; chorismate from D-erythrose 4-phosphate and phosphoenolpyruvate: step 3/7. In terms of biological role, involved in the third step of the chorismate pathway, which leads to the biosynthesis of aromatic amino acids. Catalyzes the cis-dehydration of 3-dehydroquinate (DHQ) and introduces the first double bond of the aromatic ring to yield 3-dehydroshikimate. This Streptococcus pneumoniae (strain P1031) protein is 3-dehydroquinate dehydratase.